The sequence spans 413 residues: FAD-dependent monooxygenase vrtH (413 aa).

Residues 1-23 (MQRANHTRPVLIIGAGLSGLAIG) form the signal peptide. Residue Asn5 is glycosylated (N-linked (GlcNAc...) asparagine). FAD is bound by residues Glu37 and Ala48. Asn94 carries an N-linked (GlcNAc...) asparagine glycan. Arg120 lines the FAD pocket. An N-linked (GlcNAc...) asparagine glycan is attached at Asn232. Positions 327 and 340 each coordinate FAD.

This sequence belongs to the paxM FAD-dependent monooxygenase family. It depends on FAD as a cofactor.

The protein operates within secondary metabolite biosynthesis; terpenoid biosynthesis. FAD-dependent monooxygenase; part of the gene cluster that mediates the biosynthesis of viridicatumtoxin, a tetracycline-like fungal meroterpenoid with a unique, fused spirobicyclic ring system. The first step of the pathway is the production of the malonamoyl-CoA starter unit for the polyketide synthase vrtA. The aldolase vrtJ may be involved in the synthesis of the malonamate substrate for malonamoyl-CoA synthetase vrtB. The polyketide synthase vrtA then may utilize the malonamoyl-CoA starter unit, followed by sequential condensation of eight malonyl-CoA units to form the polyketide backbone. The cyclization of the last ring could be mediated by the lactamase-like protein vrtG. The proposed post-PKS tailoring steps are a hydroxylation at C5 catalyzed the cytochrome P450 monooxygenase vrtE, a hydroxylation at C12a catalyzed by VrtH and/or VrtI, and an O-methylation by the O-methyltransferase vrtF. VrtC is then proposed to catalyze the transfer of a geranyl group synthesized by vrtD to the aromatic C ring of the tetracyclic polyketide intermediate of viridicatumtoxin to yield previridicatumtoxin. Finally, the cytochrome P450 monooxygenase vrtK catalyzes the spirocyclization of the geranyl moiety of previridicatumtoxin to afford viridicatumtoxin. This chain is FAD-dependent monooxygenase vrtH, found in Penicillium aethiopicum.